The following is a 330-amino-acid chain: Ferredoxin--NADP reductase (330 aa).

FAD contacts are provided by Thr19, Asp38, Gln46, Tyr51, Ala91, Phe129, Asp286, and Ser327.

The protein belongs to the ferredoxin--NADP reductase type 2 family. As to quaternary structure, homodimer. Requires FAD as cofactor.

It carries out the reaction 2 reduced [2Fe-2S]-[ferredoxin] + NADP(+) + H(+) = 2 oxidized [2Fe-2S]-[ferredoxin] + NADPH. The chain is Ferredoxin--NADP reductase from Nocardioides sp. (strain ATCC BAA-499 / JS614).